The primary structure comprises 493 residues: Maintenance of mitochondrial morphology protein 1 (493 aa).

The Lumenal segment spans residues 1–23 (MSQHSQYGVPGVPAQSSLSFTQG). Residues 24 to 44 (FLLGQLSVVLLIGAFIKFFIF) form a helical membrane-spanning segment. Residues 45-493 (GEAPAPPSRG…GSMPRVVRTP (449 aa)) lie on the Cytoplasmic side of the membrane. The segment at 52–104 (SRGLASRTASHHRSYSINQGDNNANNNTNNGSSPRTLREKPSTSNVLRPVPSS) is disordered. Over residues 69 to 81 (NQGDNNANNNTNN) the composition is skewed to low complexity. The segment covering 93–104 (STSNVLRPVPSS) has biased composition (polar residues). The region spanning 140–391 (QPESLDWFNV…EPRVQVVGLP (252 aa)) is the SMP-LTD domain. Positions 420–493 (SSRSGGGPVE…GSMPRVVRTP (74 aa)) are disordered.

The protein belongs to the MMM1 family. As to quaternary structure, homodimer. Component of the ER-mitochondria encounter structure (ERMES) or MDM complex, composed of mmm1, mdm10, mdm12 and mdm34. A mmm1 homodimer associates with one molecule of mdm12 on each side in a pairwise head-to-tail manner, and the SMP-LTD domains of mmm1 and mdm12 generate a continuous hydrophobic tunnel for phospholipid trafficking.

It localises to the endoplasmic reticulum membrane. Component of the ERMES/MDM complex, which serves as a molecular tether to connect the endoplasmic reticulum (ER) and mitochondria. Components of this complex are involved in the control of mitochondrial shape and protein biogenesis, and function in nonvesicular lipid trafficking between the ER and mitochondria. The mdm12-mmm1 subcomplex functions in the major beta-barrel assembly pathway that is responsible for biogenesis of all outer membrane beta-barrel proteins, and acts in a late step after the SAM complex. The mdm10-mdm12-mmm1 subcomplex further acts in the TOM40-specific pathway after the action of the mdm12-mmm1 complex. Essential for establishing and maintaining the structure of mitochondria and maintenance of mtDNA nucleoids. In Talaromyces stipitatus (strain ATCC 10500 / CBS 375.48 / QM 6759 / NRRL 1006) (Penicillium stipitatum), this protein is Maintenance of mitochondrial morphology protein 1.